A 562-amino-acid polypeptide reads, in one-letter code: F-box and WD repeat domain-containing 11-A (562 aa).

Residues 87 to 136 (GSFDKEKDLCIQLFDQWSESDQVEFVEHLIARMCHYQHGHINSYLKPMLQ) are homodimerization domain D. Residues 149 to 187 (DHIAENILSFLDARSLCSAELVCREWQRVISDGMLWKKL) enclose the F-box domain. 7 WD repeats span residues 256–295 (RSEN…CLKV), 296–335 (LTGH…VLNT), 336–375 (LIHH…DISL), 379–418 (LVGH…FVRT), 419–458 (LNGH…CLRV), 459–491 (LEGH…WDLQ), and 508–538 (LVEH…LIWD).

As to quaternary structure, self-associates. Component of the SCF(FBXW11) complex.

Its subcellular location is the cytoplasm. The protein localises to the nucleus. Its pathway is protein modification; protein ubiquitination. Its function is as follows. Substrate recognition component of a SCF (SKP1-CUL1-F-box protein) E3 ubiquitin-protein ligase complex which mediates the ubiquitination and subsequent proteasomal degradation of target proteins. Probably recognizes and binds to phosphorylated target proteins: the interaction with substrates requires the phosphorylation of the two serine residues in the substrates' destruction motif D-S-G-X(2,3,4)-S. SCF(FBXW11) mediates the ubiquitination of phosphorylated CTNNB1 and participates in Wnt signaling regulation. Participates in Wnt signaling regulation, and plays a role in eye and jaw development. SCF(FBXW11) plays a key role in NF-kappa-B activation by mediating ubiquitination of phosphorylated NFKBIA, leading to its degradation by the proteasome, thereby allowing the associated NF-kappa-B complex to translocate into the nucleus and to activate transcription. The polypeptide is F-box and WD repeat domain-containing 11-A (Danio rerio (Zebrafish)).